The following is a 279-amino-acid chain: HTH-type transcriptional regulator HdfR (279 aa).

In terms of domain architecture, HTH lysR-type spans 1-58; sequence MDTELLKTFLEVSRTRHFGRAAESLYLTQSAVSFRIRQLENQLGVNLFTRHRNNIRLT. The segment at residues 18–37 is a DNA-binding region (H-T-H motif); it reads FGRAAESLYLTQSAVSFRIR.

Belongs to the LysR transcriptional regulatory family.

Functionally, negatively regulates the transcription of the flagellar master operon flhDC by binding to the upstream region of the operon. The polypeptide is HTH-type transcriptional regulator HdfR (Escherichia coli (strain ATCC 8739 / DSM 1576 / NBRC 3972 / NCIMB 8545 / WDCM 00012 / Crooks)).